Reading from the N-terminus, the 222-residue chain is uncharacterized protein (222 aa).

4 helical membrane-spanning segments follow: residues 23–43 (FFAA…TGLL), 67–87 (IWVL…IGYL), 157–177 (IVGG…LGNV), and 187–207 (IILG…WHGY).

Belongs to the DedA family.

It localises to the cell membrane. This is an uncharacterized protein from Mycobacterium leprae (strain TN).